The sequence spans 198 residues: Molybdopterin synthase catalytic subunit (198 aa).

The span at 1 to 27 (MASQPPQEPTPTATSTPSTSALASLPP) shows a compositional bias: low complexity. A disordered region spans residues 1–40 (MASQPPQEPTPTATSTPSTSALASLPPHLDPTTYPRTLTS). Substrate is bound by residues 143 to 144 (HR), lysine 159, and 166 to 168 (KRE). The tract at residues 176-198 (EWRENRERDAEGKVVAEKQEERE) is disordered.

It belongs to the MoaE family. MOCS2B subfamily. Heterotetramer; composed of 2 small (MOCS2A) and 2 large (MOCS2B) subunits.

The protein resides in the cytoplasm. It carries out the reaction 2 [molybdopterin-synthase sulfur-carrier protein]-C-terminal-Gly-aminoethanethioate + cyclic pyranopterin phosphate + H2O = molybdopterin + 2 [molybdopterin-synthase sulfur-carrier protein]-C-terminal Gly-Gly + 2 H(+). Its pathway is cofactor biosynthesis; molybdopterin biosynthesis. Functionally, catalytic subunit of the molybdopterin synthase complex, a complex that catalyzes the conversion of precursor Z into molybdopterin. Acts by mediating the incorporation of 2 sulfur atoms from thiocarboxylated MOCS2A into precursor Z to generate a dithiolene group. The protein is Molybdopterin synthase catalytic subunit of Aspergillus clavatus (strain ATCC 1007 / CBS 513.65 / DSM 816 / NCTC 3887 / NRRL 1 / QM 1276 / 107).